The sequence spans 93 residues: MLEHALIAGAFSFCIGISGLITSRNMVRAPMCLESIFNAVNVNSVVSSNTLDAEEIKGEIFAIFVIAIAAAEAAIGLSIALAIYRNRKSTRVD.

2 consecutive transmembrane segments (helical) span residues 1–21 (MLEH…SGLI) and 60–80 (IFAI…LSIA).

This sequence belongs to the complex I subunit 4L family. NDH is composed of at least 16 different subunits, 5 of which are encoded in the nucleus.

It is found in the plastid. The protein resides in the chloroplast thylakoid membrane. It catalyses the reaction a plastoquinone + NADH + (n+1) H(+)(in) = a plastoquinol + NAD(+) + n H(+)(out). The catalysed reaction is a plastoquinone + NADPH + (n+1) H(+)(in) = a plastoquinol + NADP(+) + n H(+)(out). Its function is as follows. NDH shuttles electrons from NAD(P)H:plastoquinone, via FMN and iron-sulfur (Fe-S) centers, to quinones in the photosynthetic chain and possibly in a chloroplast respiratory chain. The immediate electron acceptor for the enzyme in this species is believed to be plastoquinone. Couples the redox reaction to proton translocation, and thus conserves the redox energy in a proton gradient. The sequence is that of NAD(P)H-quinone oxidoreductase subunit 4L, chloroplastic from Anthoceros angustus (Hornwort).